The sequence spans 192 residues: Erythropoietin (192 aa).

A signal peptide spans 1–25 (MGARDCTPLLMLSFLLFPLGFPVLG). Cystine bridges form between C32–C187 and C54–C58. N49 carries N-linked (GlcNAc...) asparagine glycosylation. N-linked (GlcNAc...) asparagine glycosylation is found at N63 and N108.

This sequence belongs to the EPO/TPO family. Produced by kidney or liver of adult mammals and by liver of fetal or neonatal mammals.

It is found in the secreted. Hormone involved in the regulation of erythrocyte proliferation and differentiation and the maintenance of a physiological level of circulating erythrocyte mass. Binds to EPOR leading to EPOR dimerization and JAK2 activation thereby activating specific downstream effectors, including STAT1 and STAT3. This chain is Erythropoietin (EPO), found in Bos mutus grunniens (Wild yak).